We begin with the raw amino-acid sequence, 286 residues long: Hypersensitive-induced response protein 1 (286 aa).

Glycine 2 carries N-myristoyl glycine lipidation. A coiled-coil region spans residues 114–190 (LDDVFEQKND…EKILQIKRAE (77 aa)).

In terms of assembly, self-interacts and forms heteromers. Interacts with NB-LRR class of R proteins before R proteins (e.g. RPS2 or RPM1) are activated by the effectors. Interacts with LRR1.

The protein resides in the cell membrane. Positive regulator of hypersensitive response (HR)-like cell death. May be involved in potassium ion channel regulation. In Arabidopsis thaliana (Mouse-ear cress), this protein is Hypersensitive-induced response protein 1.